The following is a 413-amino-acid chain: Imidazolonepropionase (413 aa).

2 residues coordinate Fe(3+): His-77 and His-79. Zn(2+) contacts are provided by His-77 and His-79. The 4-imidazolone-5-propanoate site is built by Arg-86, Tyr-149, and His-182. An N-formimidoyl-L-glutamate-binding site is contributed by Tyr-149. His-247 lines the Fe(3+) pocket. His-247 is a binding site for Zn(2+). Position 250 (Gln-250) interacts with 4-imidazolone-5-propanoate. Residue Asp-322 participates in Fe(3+) binding. Asp-322 serves as a coordination point for Zn(2+). Positions 324 and 326 each coordinate N-formimidoyl-L-glutamate. Thr-327 is a 4-imidazolone-5-propanoate binding site.

It belongs to the metallo-dependent hydrolases superfamily. HutI family. Requires Zn(2+) as cofactor. Fe(3+) is required as a cofactor.

The protein resides in the cytoplasm. It catalyses the reaction 4-imidazolone-5-propanoate + H2O = N-formimidoyl-L-glutamate. The protein operates within amino-acid degradation; L-histidine degradation into L-glutamate; N-formimidoyl-L-glutamate from L-histidine: step 3/3. Catalyzes the hydrolytic cleavage of the carbon-nitrogen bond in imidazolone-5-propanoate to yield N-formimidoyl-L-glutamate. It is the third step in the universal histidine degradation pathway. This chain is Imidazolonepropionase, found in Chromobacterium violaceum (strain ATCC 12472 / DSM 30191 / JCM 1249 / CCUG 213 / NBRC 12614 / NCIMB 9131 / NCTC 9757 / MK).